We begin with the raw amino-acid sequence, 578 residues long: Vacuolar protein 8 (578 aa).

Residue Gly-2 is the site of N-myristoyl glycine attachment. Residues Cys-4, Cys-5, and Cys-7 are each lipidated (S-palmitoyl cysteine). Phosphoserine is present on residues Ser-11 and Ser-16. ARM repeat units follow at residues 37–75 (DKDQ…AEIT), 76–114 (EKYV…NLAV), 116–155 (NENK…NLAT), 157–196 (DDNK…NMTH), 198–237 (EENR…NIAV), 239–280 (EANR…NLAS), 282–321 (TSYQ…NISI), 323–363 (PLNE…NLAA), and 407–446 (DVSK…NLCS). A Glycyl lysine isopeptide (Lys-Gly) (interchain with G-Cter in ubiquitin) cross-link involves residue Lys-77. Lys-515 is covalently cross-linked (Glycyl lysine isopeptide (Lys-Gly) (interchain with G-Cter in ubiquitin)). A disordered region spans residues 527–557 (SGIDVKNPGSNNNPSSNDNNSNNNDTGSEHQ). The segment covering 533 to 552 (NPGSNNNPSSNDNNSNNNDT) has biased composition (low complexity).

The protein belongs to the beta-catenin family. In terms of assembly, interacts with NVJ1. Forms heterotetramers of two VAC8 and two NVJ1 or two VAC8 and two ATG13. Post-translationally, palmitoylated on one or more of its N-terminal cysteine residues by PFA3, which is required for vacuole fusion.

Its subcellular location is the vacuole membrane. In terms of biological role, functions in both vacuole inheritance and protein targeting from the cytoplasm to vacuole (cvt). Involved in the formation of nucleus-vacuole junctions (NVJs) during piecemeal microautophagy of the nucleus (PMN). NVJs are interorganelle interfaces mediated by NVJ1 in the nuclear envelope and VAC8 on the vacuole membrane. Together, NVJ1 and VAC8 form Velcro-like patches through which teardrop-like portions of the nucleus are pinched off into the vacuolar lumen and degraded by the PMN process. This Saccharomyces cerevisiae (strain ATCC 204508 / S288c) (Baker's yeast) protein is Vacuolar protein 8 (VAC8).